Reading from the N-terminus, the 488-residue chain is Thiamine transporter 2 (488 aa).

Topologically, residues 1-8 are cytoplasmic; sequence MDSSCRTP. A helical membrane pass occupies residues 9–29; sequence PSNSWVYPTVILCLFGFFSMF. Over 30–54 the chain is Extracellular; sequence RPSEAFLIPFLSEPSKNLTSPEMTN. An N-linked (GlcNAc...) asparagine glycan is attached at Asn46. The helical transmembrane segment at 55-75 threads the bilayer; the sequence is EILPVWTYSYLATLPPVFVLT. Residues 76 to 82 lie on the Cytoplasmic side of the membrane; the sequence is DYLRYKP. A helical membrane pass occupies residues 83 to 103; that stretch reads VIMLHVVAFATSYLFLLFGQG. The Extracellular segment spans residues 104-111; it reads VMLMQTAE. Residues 112–132 traverse the membrane as a helical segment; it reads FFFGVVSATEIAYFAYIYSMV. Topologically, residues 133–145 are cytoplasmic; it reads SPEHYQKVSSYCR. Residues 146 to 166 form a helical membrane-spanning segment; the sequence is SITLVAYTAGSVLAQLLVSLT. The Extracellular segment spans residues 167–172; that stretch reads NLPYSS. The helical transmembrane segment at 173 to 193 threads the bilayer; that stretch reads LFYISLACVSVAFFFSLFLPM. The Cytoplasmic portion of the chain corresponds to 194–276; the sequence is PKKSMFFHAK…YSSKHLVYWS (83 aa). A helical membrane pass occupies residues 277 to 297; that stretch reads LWWAFATAGYNQILNYVQVLW. At 298-310 the chain is on the extracellular side; sequence EHKAPSQDSSIYN. The chain crosses the membrane as a helical span at residues 311–331; sequence GAVEAIATFGGALASFSVGYL. The Cytoplasmic segment spans residues 332-335; the sequence is KVNW. The chain crosses the membrane as a helical span at residues 336–356; it reads DLLGELGLAVFSAVIAGSLFL. Over 357–369 the chain is Extracellular; the sequence is MNYSRSIWVCYAG. Residue Asn358 is glycosylated (N-linked (GlcNAc...) asparagine). A helical membrane pass occupies residues 370 to 390; that stretch reads YLLVKSSYSFLITIAVFQIAV. Residues 391–399 lie on the Cytoplasmic side of the membrane; sequence NLSLERYAL. Residues 400-420 form a helical membrane-spanning segment; that stretch reads VFGIDTFIALVIQTIMTMIVV. Residues 421–428 are Extracellular-facing; sequence DQRGLQLP. Residues 429–449 traverse the membrane as a helical segment; the sequence is VTTQFLVYGSYFAVIAGVFLM. At 450-488 the chain is on the cytoplasmic side; sequence RSIYILCSAKCRKEVQNLATTRSPNEPHPQEPSNVSTKF. Residues 469–488 are disordered; it reads TTRSPNEPHPQEPSNVSTKF.

The protein belongs to the reduced folate carrier (RFC) transporter (TC 2.A.48) family. In terms of tissue distribution, high expression in kidney, brain, lung and small intestine. Detected in pancreatic acinar cells (at protein level). Also expressed strongly in pancreatic islet cells.

The protein resides in the membrane. The enzyme catalyses thiamine(out) + H(+)(in) = thiamine(in) + H(+)(out). Functionally, high-affinity transporter for the intake of thiamine. Unlike the human ortholog, lacks H(+)-dependent pyridoxine transport activity due to an absence of seven critical amino-acids required for pyridoxine transport. This is Thiamine transporter 2 (Slc19a3) from Mus musculus (Mouse).